A 307-amino-acid chain; its full sequence is MSIRRVVVLYGGISEERAVSLISGQQVVAALREAGYEVTPIEVGADLRDTIAALTPAPDVVFNALHGRFGEDGAIQGVLDWLNIPYTHSGVRASAIAMDKAAARTAFLAAGLPVAEGRLVTVEELAEQDPLPRPFVIKPANEGSAVGVHILHEGDNRRTEIARSWSFGGQALVEEYIPGRELTVGVLNDRALTVTDIRPRSAFYDYESKYAEGGSRHILPAQMHPDAFKRALDVALAAHHALGCRGATRSDFRYDDTRAEPGRLVLLEVNTQPGLTPTSLLPEQAALMGMDFVSLCRWMVEQATCRA.

One can recognise an ATP-grasp domain in the interval 104-301; the sequence is RTAFLAAGLP…FVSLCRWMVE (198 aa). Residue 130–183 coordinates ATP; the sequence is PLPRPFVIKPANEGSAVGVHILHEGDNRRTEIARSWSFGGQALVEEYIPGRELT. 3 residues coordinate Mg(2+): Asp251, Glu268, and Asn270.

The protein belongs to the D-alanine--D-alanine ligase family. Mg(2+) is required as a cofactor. Requires Mn(2+) as cofactor.

Its subcellular location is the cytoplasm. The enzyme catalyses 2 D-alanine + ATP = D-alanyl-D-alanine + ADP + phosphate + H(+). It participates in cell wall biogenesis; peptidoglycan biosynthesis. In terms of biological role, cell wall formation. The sequence is that of D-alanine--D-alanine ligase from Granulibacter bethesdensis (strain ATCC BAA-1260 / CGDNIH1).